The following is a 1144-amino-acid chain: ATP-dependent helicase/deoxyribonuclease subunit B (1144 aa).

The UvrD-like helicase ATP-binding domain maps to 1-276 (MAIRYVFGRA…IDLDRNERPV (276 aa)). An ATP-binding site is contributed by 8-15 (GRAGRGKS). Residues 274–584 (RPVLPKVQEI…LVGSIERSKS (311 aa)) form the UvrD-like helicase C-terminal domain. Residues Cys784, Cys1102, Cys1105, and Cys1111 each coordinate [4Fe-4S] cluster.

Belongs to the helicase family. AddB/RexB type 1 subfamily. As to quaternary structure, heterodimer of AddA and AddB. It depends on Mg(2+) as a cofactor. Requires [4Fe-4S] cluster as cofactor.

In terms of biological role, the heterodimer acts as both an ATP-dependent DNA helicase and an ATP-dependent, dual-direction single-stranded exonuclease. Recognizes the chi site generating a DNA molecule suitable for the initiation of homologous recombination. The AddB subunit has 5' -&gt; 3' nuclease activity but not helicase activity. This Alkaliphilus oremlandii (strain OhILAs) (Clostridium oremlandii (strain OhILAs)) protein is ATP-dependent helicase/deoxyribonuclease subunit B.